Reading from the N-terminus, the 487-residue chain is Betaine aldehyde dehydrogenase (487 aa).

The K(+) site is built by isoleucine 27 and aspartate 93. Residue 149 to 151 coordinates NAD(+); that stretch reads GAW. Lysine 161 serves as the catalytic Charge relay system. Residues 175–178 and 228–231 contribute to the NAD(+) site; these read KPSE and SVPT. Leucine 243 contacts K(+). Residue glutamate 249 is the Proton acceptor of the active site. 3 residues coordinate NAD(+): glycine 251, cysteine 283, and glutamate 384. Cysteine 283 acts as the Nucleophile in catalysis. Position 283 is a cysteine sulfenic acid (-SOH) (cysteine 283). 2 residues coordinate K(+): lysine 454 and glycine 457. Glutamate 461 (charge relay system) is an active-site residue.

Belongs to the aldehyde dehydrogenase family. Dimer of dimers. Requires K(+) as cofactor.

It catalyses the reaction betaine aldehyde + NAD(+) + H2O = glycine betaine + NADH + 2 H(+). Its pathway is amine and polyamine biosynthesis; betaine biosynthesis via choline pathway; betaine from betaine aldehyde: step 1/1. Functionally, involved in the biosynthesis of the osmoprotectant glycine betaine. Catalyzes the irreversible oxidation of betaine aldehyde to the corresponding acid. This is Betaine aldehyde dehydrogenase from Brucella abortus (strain S19).